Reading from the N-terminus, the 1184-residue chain is Cartilage intermediate layer protein 1 (1184 aa).

The signal sequence occupies residues 1–21 (MVGTKAWVFSFLVLEVTSVLG). 2 N-linked (GlcNAc...) asparagine glycosylation sites follow: Asn-129 and Asn-132. A TSP type-1 domain is found at 149-201 (ERIWSPWSPWSKCSAACGQTGVQTRTRICLAEMVSLCSEASEEGQHCMGQDCT). 4 disulfides stabilise this stretch: Cys-161–Cys-195, Cys-165–Cys-200, Cys-177–Cys-185, and Cys-330–Cys-376. Residues 309-395 (PYMVMNPETK…KSKVAQLIVI (87 aa)) enclose the Ig-like C2-type domain. Residues Asn-346, Asn-420, Asn-550, Asn-631, Asn-1000, and Asn-1056 are each glycosylated (N-linked (GlcNAc...) asparagine). The tract at residues 1136–1170 (TPAQSPAAGTVQGRVPSRRQQRASRGGQRQGGVVA) is disordered. Positions 1158 to 1170 (ASRGGQRQGGVVA) are enriched in low complexity.

Monomer. Interacts with TGFB1. Cleaved into 2 chains possibly by a furin-like protease upon or preceding secretion. In terms of tissue distribution, specifically expressed in cartilage. Localizes in the intermediates layer of articular cartilage but neither in the superficial nor in the deepest regions. Specifically and highly expressed in intervertebral disk tissue. Expression increases with aging in hip articular cartilage. Overexpressed in articular hyaline cartilage from patients with calcium pyrophosphate dihydrate crystal deposition disease (CPPD). Expression in intervertebral disk tissue from individuals with lumbar disk disease increases as disk degeneration progresses.

It is found in the secreted. It localises to the extracellular space. Its subcellular location is the extracellular matrix. In terms of biological role, probably plays a role in cartilage scaffolding. May act by antagonizing TGF-beta1 (TGFB1) and IGF1 functions. Has the ability to suppress IGF1-induced proliferation and sulfated proteoglycan synthesis, and inhibits ligand-induced IGF1R autophosphorylation. May inhibit TGFB1-mediated induction of cartilage matrix genes via its interaction with TGFB1. Overexpression may lead to impair chondrocyte growth and matrix repair and indirectly promote inorganic pyrophosphate (PPi) supersaturation in aging and osteoarthritis cartilage. The polypeptide is Cartilage intermediate layer protein 1 (CILP) (Homo sapiens (Human)).